Reading from the N-terminus, the 359-residue chain is 3-dehydroquinate synthase (359 aa).

NAD(+)-binding positions include 106 to 110, 130 to 131, Lys143, and Lys152; these read GVVGD and TS. Residues Glu185, His246, and His263 each contribute to the Zn(2+) site.

This sequence belongs to the sugar phosphate cyclases superfamily. Dehydroquinate synthase family. Co(2+) serves as cofactor. The cofactor is Zn(2+). Requires NAD(+) as cofactor.

It localises to the cytoplasm. It carries out the reaction 7-phospho-2-dehydro-3-deoxy-D-arabino-heptonate = 3-dehydroquinate + phosphate. Its pathway is metabolic intermediate biosynthesis; chorismate biosynthesis; chorismate from D-erythrose 4-phosphate and phosphoenolpyruvate: step 2/7. Catalyzes the conversion of 3-deoxy-D-arabino-heptulosonate 7-phosphate (DAHP) to dehydroquinate (DHQ). This Clostridium kluyveri (strain ATCC 8527 / DSM 555 / NBRC 12016 / NCIMB 10680 / K1) protein is 3-dehydroquinate synthase.